The chain runs to 664 residues: Two-component response regulator ARR2 (664 aa).

The interval 1–21 (MVNPGHGRGPDSGTAAGGSNS) is disordered. The Response regulatory domain maps to 29–144 (RVLVVDDDPT…ALKNIWQHVV (116 aa)). 4-aspartylphosphate is present on Asp-80. Residues 151 to 215 (WNVSEHSGGS…DDKEDSSSLK (65 aa)) form a disordered region. Residues 165–178 (GGDRDRQQQHREDA) are compositionally biased toward basic and acidic residues. Residues 180-191 (NNSSSVNEGNGR) show a composition bias toward polar residues. The segment covering 200 to 209 (EVDDQGDDKE) has biased composition (acidic residues). The Nuclear localization signal motif lies at 215 to 218 (KKPR). The segment at residues 218 to 268 (RVVWSVELHQQFVAAVNQLGVDKAVPKKILEMMNVPGLTRENVASHLQKYR) is a DNA-binding region (myb-like GARP). A compositionally biased stretch (low complexity) spans 554-567 (AAFSTSEAYSSSST). The interval 554 to 589 (AAFSTSEAYSSSSTQRKRRETDATVVGEHGQNLQSP) is disordered.

This sequence belongs to the ARR family. Type-B subfamily. As to quaternary structure, binds the target DNA as a monomer. Interacts with histidine-containing phosphotransfer proteins. Two-component system major event consists of a His-to-Asp phosphorelay between a sensor histidine kinase (HK) and a response regulator (RR). In plants, the His-to-Asp phosphorelay involves an additional intermediate named Histidine-containing phosphotransfer protein (HPt). This multistep phosphorelay consists of a His-Asp-His-Asp sequential transfer of a phosphate group between first a His and an Asp of the HK protein, followed by the transfer to a conserved His of the HPt protein and finally the transfer to an Asp in the receiver domain of the RR protein. Phosphorylated in response to cytokinin mediated by AHK3. In terms of tissue distribution, detected in the whole plant. Predominantly expressed in pollen.

The protein localises to the nucleus. Functionally, transcriptional activator that binds specifically to the DNA sequence 5'-[AG]GATT-3'. Functions as a response regulator involved in His-to-Asp phosphorelay signal transduction system. Phosphorylation of the Asp residue in the receiver domain activates the ability of the protein to promote the transcription of target genes. Could directly activate some type-A response regulators in response to cytokinins. Involved in the expression of nuclear genes for components of mitochondrial complex I. Promotes cytokinin-mediated leaf longevity. Involved in the ethylene signaling pathway in an ETR1-dependent manner and in the cytokinin signaling pathway. In Arabidopsis thaliana (Mouse-ear cress), this protein is Two-component response regulator ARR2 (ARR2).